The primary structure comprises 115 residues: Galanin-like peptide (115 aa).

The first 23 residues, 1–23, serve as a signal peptide directing secretion; it reads MAPSVPLVLLLVLLLSLAETPAS. The propeptide occupies 86–115; the sequence is NVMEAFAKPEIGDLDVLSKKIPKEEDVLKS.

This sequence belongs to the galanin family. In terms of tissue distribution, hypothalamus and pituitary gland.

Its subcellular location is the secreted. Functionally, hypothalamic neuropeptide which binds to the G-protein-coupled galanin receptors (GALR1, GALR2 and GALR3). Involved in a large number of putative physiological functions in CNS homeostatic processes, including the regulation of gonadotropin-releasing hormone secretion. In terms of biological role, exhibits potent and dose-dependent vasoconstrictor and anti-edema activity in the cutaneous microvasculature, a physiologic effects which does not appear to be mediated via GALR1 or GALR2. Exhibits antimicrobial activity against Gram-negative bacterias, inducing bacterial membrane blebbing. The protein is Galanin-like peptide (GALP) of Macaca nemestrina (Pig-tailed macaque).